The sequence spans 725 residues: Glyoxysomal fatty acid beta-oxidation multifunctional protein MFP-a (725 aa).

The active-site Nucleophile is the Glu-119. The Proton acceptor role is filled by Glu-139. A Microbody targeting signal motif is present at residues 723 to 725 (SRL).

This sequence in the N-terminal section; belongs to the enoyl-CoA hydratase/isomerase family. It in the central section; belongs to the 3-hydroxyacyl-CoA dehydrogenase family.

It is found in the glyoxysome. The enzyme catalyses a (3S)-3-hydroxyacyl-CoA = a (2E)-enoyl-CoA + H2O. It carries out the reaction a 4-saturated-(3S)-3-hydroxyacyl-CoA = a (3E)-enoyl-CoA + H2O. It catalyses the reaction a (3Z)-enoyl-CoA = a 4-saturated (2E)-enoyl-CoA. The catalysed reaction is a (3E)-enoyl-CoA = a 4-saturated (2E)-enoyl-CoA. The enzyme catalyses (3S)-3-hydroxybutanoyl-CoA = (3R)-3-hydroxybutanoyl-CoA. It carries out the reaction a (3S)-3-hydroxyacyl-CoA + NAD(+) = a 3-oxoacyl-CoA + NADH + H(+). The protein operates within lipid metabolism; fatty acid beta-oxidation. The chain is Glyoxysomal fatty acid beta-oxidation multifunctional protein MFP-a from Brassica napus (Rape).